A 576-amino-acid polypeptide reads, in one-letter code: Aspartate--tRNA ligase, cytoplasmic 1 (576 aa).

The interval 1 to 78 (MSETTPVPVG…NWGELPMNQS (78 aa)) is disordered. The span at 20–43 (LKKEQKKLEKEKKIAEAKAKKAAE) shows a compositional bias: basic and acidic residues. Glu-302 serves as a coordination point for L-aspartate. The tract at residues 324–327 (QLYK) is aspartate. Residue Arg-346 participates in L-aspartate binding. ATP contacts are provided by residues 346 to 348 (RAE), 354 to 356 (RHL), and Glu-499. 2 residues coordinate L-aspartate: Ser-502 and Arg-506. 547 to 550 (GLER) is a binding site for ATP.

It belongs to the class-II aminoacyl-tRNA synthetase family. Type 2 subfamily.

It is found in the cytoplasm. The catalysed reaction is tRNA(Asp) + L-aspartate + ATP = L-aspartyl-tRNA(Asp) + AMP + diphosphate. The polypeptide is Aspartate--tRNA ligase, cytoplasmic 1 (aspS1) (Dictyostelium discoideum (Social amoeba)).